The primary structure comprises 1085 residues: Toxin VasX (1085 aa).

Residues 1–20 are disordered; that stretch reads MSNPNQAAKTGQTNDAQNPA. The next 4 helical transmembrane spans lie at 753 to 773, 813 to 833, 860 to 880, and 884 to 904; these read ALGE…AISA, IALV…ESWG, IIFY…PSIA, and AGWM…GVIL.

Its subcellular location is the secreted. It is found in the host membrane. Toxin secreted by the type VI (T6SS) secretion system that acts on prokaryotic target cells. Acts in conjunction with VasW, an accessory protein to VasX, to compromise the inner membrane of prokaryotic target cells. This chain is Toxin VasX, found in Vibrio cholerae serotype O1 (strain ATCC 39315 / El Tor Inaba N16961).